Consider the following 130-residue polypeptide: MTSPLENLENHLEMFIENVRQIRIIVSDFQPQGQNVLNQKIQSLVTGLQEIDKLKNQIDVNVPLEVFDYIDQGRNPQLYTKDCIDKALTKNEEVKGKIDSYRKFKSNLMKELSETFPVEISKYKAIRGDE.

The protein belongs to the Mediator complex subunit 10 family. In terms of assembly, component of the Mediator complex.

It is found in the nucleus. In terms of biological role, component of the Mediator complex, a coactivator involved in the regulated transcription of nearly all RNA polymerase II-dependent genes. Mediator functions as a bridge to convey information from gene-specific regulatory proteins to the basal RNA polymerase II transcription machinery. Mediator is recruited to promoters by direct interactions with regulatory proteins and serves as a scaffold for the assembly of a functional preinitiation complex with RNA polymerase II and the general transcription factors. This is Mediator of RNA polymerase II transcription subunit 10 (MED10) from Anopheles gambiae (African malaria mosquito).